A 286-amino-acid polypeptide reads, in one-letter code: Beta-lactamase SHV-8 (286 aa).

A signal peptide spans 1–21; the sequence is MRYIRLCIISLLATLPLAVHA. Serine 66 acts as the Acyl-ester intermediate in catalysis. A disulfide bridge connects residues cysteine 73 and cysteine 119. Glutamate 164 serves as the catalytic Proton acceptor. 230 to 232 is a binding site for substrate; it reads KTG.

The protein belongs to the class-A beta-lactamase family.

It carries out the reaction a beta-lactam + H2O = a substituted beta-amino acid. Its function is as follows. SHV enzymes hydrolyze broad spectrum cephalosporins notably cefotaxime and ceftazidime. This Escherichia coli protein is Beta-lactamase SHV-8 (bla).